The chain runs to 385 residues: Cytochrome b (385 aa).

A run of 4 helical transmembrane segments spans residues 32–52 (FGSL…TLAM), 76–98 (WFIR…AHMG), 113–133 (PWSI…MGYV), and 179–199 (FFAL…LHLI). Histidine 82 and histidine 96 together coordinate heme b. Heme b is bound by residues histidine 183 and histidine 197. Residue histidine 202 participates in a ubiquinone binding. The next 4 membrane-spanning stretches (helical) occupy residues 225–245 (YSFK…LFVF), 289–309 (LGGV…PIVD), 321–341 (ISKL…VLGQ), and 348–368 (FIVL…ILLP).

Belongs to the cytochrome b family. As to quaternary structure, fungal cytochrome b-c1 complex contains 10 subunits; 3 respiratory subunits, 2 core proteins and 5 low-molecular weight proteins. Cytochrome b-c1 complex is a homodimer. Heme b is required as a cofactor.

The protein localises to the mitochondrion inner membrane. Functionally, component of the ubiquinol-cytochrome c reductase complex (complex III or cytochrome b-c1 complex) that is part of the mitochondrial respiratory chain. The b-c1 complex mediates electron transfer from ubiquinol to cytochrome c. Contributes to the generation of a proton gradient across the mitochondrial membrane that is then used for ATP synthesis. The chain is Cytochrome b (COB) from Yarrowia lipolytica (strain CLIB 122 / E 150) (Yeast).